The following is a 494-amino-acid chain: Membrane-bound lytic murein transglycosylase F (494 aa).

The N-terminal stretch at 1–20 (MIKYLYVILLGLLLSGCQPA) is a signal peptide. Residues 21–259 (EVVEIEASPK…HLNEKYFGHV (239 aa)) are non-LT domain. The LT domain stretch occupies residues 260–494 (KRFDYVDTRA…LKPKLGAGQP (235 aa)). Glu304 is an active-site residue. Polar residues predominate over residues 473–485 (QSLASDSKTNNTL). Positions 473–494 (QSLASDSKTNNTLKPKLGAGQP) are disordered.

The protein in the N-terminal section; belongs to the bacterial solute-binding protein 3 family. This sequence in the C-terminal section; belongs to the transglycosylase Slt family.

Its subcellular location is the cell outer membrane. The catalysed reaction is Exolytic cleavage of the (1-&gt;4)-beta-glycosidic linkage between N-acetylmuramic acid (MurNAc) and N-acetylglucosamine (GlcNAc) residues in peptidoglycan, from either the reducing or the non-reducing ends of the peptidoglycan chains, with concomitant formation of a 1,6-anhydrobond in the MurNAc residue.. Murein-degrading enzyme that degrades murein glycan strands and insoluble, high-molecular weight murein sacculi, with the concomitant formation of a 1,6-anhydromuramoyl product. Lytic transglycosylases (LTs) play an integral role in the metabolism of the peptidoglycan (PG) sacculus. Their lytic action creates space within the PG sacculus to allow for its expansion as well as for the insertion of various structures such as secretion systems and flagella. This Shewanella denitrificans (strain OS217 / ATCC BAA-1090 / DSM 15013) protein is Membrane-bound lytic murein transglycosylase F.